The sequence spans 171 residues: Plastocyanin minor isoform, chloroplastic (171 aa).

One can recognise a Plastocyanin-like domain in the interval 73-171 (MEVLLGSDDG…AGMVGKLTVK (99 aa)). Cu cation is bound by residues H109, C156, H159, and M164.

This sequence belongs to the plastocyanin family. Cu(2+) serves as cofactor.

The protein localises to the plastid. The protein resides in the chloroplast thylakoid membrane. Participates in electron transfer between P700 and the cytochrome b6-f complex in photosystem I. Seems to be a minor plastocyanin in Arabidopsis. In Arabidopsis thaliana (Mouse-ear cress), this protein is Plastocyanin minor isoform, chloroplastic (PETE).